The following is a 191-amino-acid chain: Gene BABR protein 1 (191 aa).

The sequence is that of Gene BABR protein 1 from Babesia bovis.